The sequence spans 208 residues: Protein-L-isoaspartate O-methyltransferase (208 aa).

S59 is a catalytic residue.

Belongs to the methyltransferase superfamily. L-isoaspartyl/D-aspartyl protein methyltransferase family.

Its subcellular location is the cytoplasm. The catalysed reaction is [protein]-L-isoaspartate + S-adenosyl-L-methionine = [protein]-L-isoaspartate alpha-methyl ester + S-adenosyl-L-homocysteine. Catalyzes the methyl esterification of L-isoaspartyl residues in peptides and proteins that result from spontaneous decomposition of normal L-aspartyl and L-asparaginyl residues. It plays a role in the repair and/or degradation of damaged proteins. The polypeptide is Protein-L-isoaspartate O-methyltransferase (Escherichia fergusonii (strain ATCC 35469 / DSM 13698 / CCUG 18766 / IAM 14443 / JCM 21226 / LMG 7866 / NBRC 102419 / NCTC 12128 / CDC 0568-73)).